Reading from the N-terminus, the 212-residue chain is Thymidylate kinase (212 aa).

11–18 (GPEGAGKT) contributes to the ATP binding site.

It belongs to the thymidylate kinase family.

The enzyme catalyses dTMP + ATP = dTDP + ADP. Functionally, phosphorylation of dTMP to form dTDP in both de novo and salvage pathways of dTTP synthesis. This chain is Thymidylate kinase, found in Streptococcus pneumoniae serotype 2 (strain D39 / NCTC 7466).